The primary structure comprises 126 residues: Large ribosomal subunit protein bL20 (126 aa).

It belongs to the bacterial ribosomal protein bL20 family.

In terms of biological role, binds directly to 23S ribosomal RNA and is necessary for the in vitro assembly process of the 50S ribosomal subunit. It is not involved in the protein synthesizing functions of that subunit. In Acholeplasma laidlawii (strain PG-8A), this protein is Large ribosomal subunit protein bL20.